The following is a 561-amino-acid chain: Putative transport protein YbjL (561 aa).

Transmembrane regions (helical) follow at residues 8–28 (LLNGNYILLLFVVLALGLCLG), 32–52 (LGSVQLGNSIGVLVVSLLLGQ), 66–86 (FMLFIFCVGVEAGPNFFSIFF), 94–114 (MLALVMVGSALLIALGLGKLF), and 158–178 (NLSLGYALTYLIGLVSLIVGA). 2 consecutive RCK C-terminal domains span residues 200 to 288 (RGLD…SFRN) and 292 to 373 (VFDR…RIGF). 5 consecutive transmembrane segments (helical) span residues 383-403 (LLAFCAFFIIGLMIGMITFQF), 406-426 (FSFGIGNAAGLLFAGIMLGFL), 447-467 (FGLMVFMAGVGLSAGSGINNG), 475-495 (MLIAGLVVSLVPVVICFLFGA), and 537-557 (GTYAIANVLLTLAGTLIVIIW).

It belongs to the AAE transporter (TC 2.A.81) family. YbjL subfamily.

The protein localises to the cell membrane. The polypeptide is Putative transport protein YbjL (Salmonella choleraesuis (strain SC-B67)).